We begin with the raw amino-acid sequence, 200 residues long: QLCLLQPLGSGGFGSVYKATYHGATVAVKQVKKSSKNRLASRQSFWAELNVARLQHNNVVRVVAASTCAPASQNSLGTIIMEYVGNITLHHVIYGTGDAWRQGEDDEGGCGRKALSMEETVCYSCDIMTGLAFLHSQDIVHLDLKPANIFITEQGVCKIGDFGCSQKLEEGLSQSPHVCQQGGTYTHRAPELLKGERVTA.

One can recognise a Protein kinase domain in the interval Leu2 to Ala200. Residues Leu8–Val16 and Lys29 each bind ATP. Asp143 (proton acceptor) is an active-site residue.

The protein belongs to the protein kinase superfamily. Ser/Thr protein kinase family.

It catalyses the reaction L-seryl-[protein] + ATP = O-phospho-L-seryl-[protein] + ADP + H(+). It carries out the reaction L-threonyl-[protein] + ATP = O-phospho-L-threonyl-[protein] + ADP + H(+). The chain is Serine/threonine-protein kinase mos (MOS) from Vultur gryphus (Andean condor).